We begin with the raw amino-acid sequence, 301 residues long: tRNA pseudouridine synthase B (301 aa).

D38 acts as the Nucleophile in catalysis.

The protein belongs to the pseudouridine synthase TruB family. Type 1 subfamily.

It catalyses the reaction uridine(55) in tRNA = pseudouridine(55) in tRNA. Functionally, responsible for synthesis of pseudouridine from uracil-55 in the psi GC loop of transfer RNAs. This Limosilactobacillus reuteri (strain DSM 20016) (Lactobacillus reuteri) protein is tRNA pseudouridine synthase B.